We begin with the raw amino-acid sequence, 115 residues long: Evasin P1183 (115 aa).

The first 25 residues, M1 to L25, serve as a signal peptide directing secretion. 4 disulfides stabilise this stretch: C38-C58, C54-C94, C70-C99, and C89-C108. 3 N-linked (GlcNAc...) asparagine glycosylation sites follow: N45, N72, and N103.

It is found in the secreted. Salivary chemokine-binding protein which binds to host chemokine CCL2. The chain is Evasin P1183 from Amblyomma triste (Neotropical tick).